The sequence spans 405 residues: MADPKYANLPGIASNEPDVYETSDLPEDDQAQFESELEELCSDSVERIVVNPNAAYDKFKDKHVSAKSLDFSDRISKNRRVGYESGDYELLAEGCGVKETPQQKYQRLVNEIHELCQDVEKIQTSTKESGAEERLTPVALAQQAAQLKQQLVSAHLDSLLGPDAHINLTDPDGALAKRLLTQLEVARGVRSGAGADGKTAAPKGPDGVILYELHSRPEQEKFTESAKVAELERRLAELETAVGSGSDKRGPLSSGVQGSSLTETLELLQARVSALDAATLDQVEARLQSVLGKMNEIAKHKATMEDAETQSKVSQLYDVVQKWDAMATSLPQVVRRLTAVRELHEQAMQFGQLLTHLDTTQQMINNSLKDNSTLLTQVQQTMKENLLAVEENFSALDQRMKKLNK.

The interval 1–24 (MADPKYANLPGIASNEPDVYETSD) is disordered. Coiled-coil stretches lie at residues 102–125 (QQKYQRLVNEIHELCQDVEKIQTS) and 379–405 (QQTMKENLLAVEENFSALDQRMKKLNK).

Belongs to the dynactin subunit 2 family. In terms of assembly, subunit of dynactin, a multiprotein complex part of a tripartite complex with dynein and a adapter, such as BICDL1, BICD2 or HOOK3. The dynactin complex is built around ACTR1A/ACTB filament and consists of an actin-related filament composed of a shoulder domain, a pointed end and a barbed end. Its length is defined by its flexible shoulder domain. The soulder is composed of 2 DCTN1 subunits, 4 DCTN2 and 2 DCTN3.

It is found in the cytoplasm. The protein resides in the cytoskeleton. It localises to the microtubule organizing center. Its subcellular location is the centrosome. The protein localises to the membrane. In terms of biological role, part of the dynactin complex that activates the molecular motor dynein for ultra-processive transport along microtubules. In the dynactin soulder domain, binds the ACTR1A filament and acts as a molecular ruler to determine the length. Modulates cytoplasmic dynein binding to an organelle, and plays a role in prometaphase chromosome alignment and spindle organization during mitosis. Involved in anchoring microtubules to centrosomes. The chain is Dynactin subunit 2 (dctn2) from Danio rerio (Zebrafish).